The chain runs to 282 residues: Protein-export membrane protein SecF (282 aa).

6 helical membrane passes run 16-36 (MVALPLCLLILSVIFLAFNTV), 126-146 (QAIWALLFAFVLMAIVVFVAF), 148-168 (IFIPSVAVVLSAFSDIVITAA), 169-189 (FMDVFGLTLSLGTTAALLMLI), 221-241 (GIIMTTTTLAAVVVMFIVFSL), and 253-273 (VLIIGLIIDMMNTWMLNAGLL).

It belongs to the SecD/SecF family. SecF subfamily. In terms of assembly, part of the protein translocation apparatus. Forms a complex with SecD.

The protein localises to the cell membrane. In terms of biological role, involved in protein export. The protein is Protein-export membrane protein SecF of Methanolacinia petrolearia (strain DSM 11571 / OCM 486 / SEBR 4847) (Methanoplanus petrolearius).